The sequence spans 566 residues: Solute carrier family 22 member 16 (566 aa).

A helical membrane pass occupies residues 20–40; sequence FASAFQTISCGIHYLASVFIA. N-linked (GlcNAc...) asparagine glycosylation is found at asparagine 52, asparagine 60, and asparagine 112. 5 helical membrane-spanning segments follow: residues 149–169, 176–196, 201–221, 237–257, and 261–281; these read LIQP…GDIA, PIIW…AFTF, FVIV…VVFV, MHVH…GFLV, and WIYQ…CWML. The N-linked (GlcNAc...) asparagine glycan is linked to asparagine 344. Transmembrane regions (helical) follow at residues 351-371, 381-401, 408-428, 436-456, 468-488, and 493-513; these read TITV…FALN, LNLF…CLGM, NTLA…MLIP, IAMS…IYLY, LAVG…PFCV, and VWIF…GILT.

This sequence belongs to the major facilitator (TC 2.A.1) superfamily. Organic cation transporter (TC 2.A.1.19) family.

It localises to the membrane. In terms of biological role, high affinity carnitine transporter. This chain is Solute carrier family 22 member 16 (slc22a16), found in Xenopus laevis (African clawed frog).